Consider the following 170-residue polypeptide: Photosystem I assembly protein Ycf3 (170 aa).

TPR repeat units follow at residues 35-68 (AFTY…EVDA), 72-105 (SYIL…NPSL), and 120-153 (GEQA…APTN).

This sequence belongs to the Ycf3 family.

It is found in the plastid. The protein resides in the chloroplast thylakoid membrane. Its function is as follows. Essential for the assembly of the photosystem I (PSI) complex. May act as a chaperone-like factor to guide the assembly of the PSI subunits. The sequence is that of Photosystem I assembly protein Ycf3 from Tetradesmus obliquus (Green alga).